The primary structure comprises 97 residues: RxLR effector protein PexRD21 (97 aa).

The signal sequence occupies residues 1–21 (MRLSYILVVVIAVTLQACVCA). The RxLR-dEER motif lies at 48–66 (RLLRGVKKRTAEREVQEER).

Belongs to the RxLR effector family.

The protein resides in the secreted. It is found in the host cell membrane. Effector that is involved in host plant infection. Contributes to virulence during the early infection stage, by inhibiting plant defense responses induced by both PAMP-triggered immunity (PTI) and effector-triggered immunity (ETI). The polypeptide is RxLR effector protein PexRD21 (Phytophthora infestans (strain T30-4) (Potato late blight agent)).